Consider the following 256-residue polypeptide: Hydroxyacylglutathione hydrolase (256 aa).

Zn(2+) contacts are provided by His-57, His-59, Asp-61, His-62, His-115, Asp-134, and His-172.

It belongs to the metallo-beta-lactamase superfamily. Glyoxalase II family. Monomer. It depends on Zn(2+) as a cofactor.

It catalyses the reaction an S-(2-hydroxyacyl)glutathione + H2O = a 2-hydroxy carboxylate + glutathione + H(+). The protein operates within secondary metabolite metabolism; methylglyoxal degradation; (R)-lactate from methylglyoxal: step 2/2. Functionally, thiolesterase that catalyzes the hydrolysis of S-D-lactoyl-glutathione to form glutathione and D-lactic acid. In Jannaschia sp. (strain CCS1), this protein is Hydroxyacylglutathione hydrolase.